We begin with the raw amino-acid sequence, 360 residues long: MTQQPLRGVTSLRFNQDQSCFCCAMETGVRIYNVEPLMEKGHLDHEQVGSMGLVEMLHRSNLLALVGGGSSPKFSEISVLIWDDAREGKDSKEKLVLEFTFTKPVLSVRMRHDKIVIVLKNRIYVYSFPDNPRKLFEFDTRDNPKGLCDLCPSLEKQLLVFPGHKCGSLQLVDLASTKPGTSSAPFTINAHQSDIACVSLNQPGTVVASASQKGTLIRLFDTQSKEKLVELRRGTDPATLYCINFSHDSSFLCASSDKGTVHIFALKDTRLNRRSALARVGKVGPMIGQYVDSQWSLASFTVPAESACICAFGRNTSKNVNSVIAICVDGTFHKYVFTPDGNCNREAFDVYLDICDDDDF.

7 WD repeats span residues 1 to 34, 40 to 84, 92 to 128, 133 to 174, 183 to 222, 227 to 266, and 284 to 329; these read MTQQPLRGVTSLRFNQDQSCFCCAMETGVRIYNV, KGHL…IWDD, KEKLVLEFTFTKPVLSVRMRHDKIVIVLKNRIYVYSF, RKLF…LVDL, SAPFTINAHQSDIACVSLNQPGTVVASASQKGTLIRLFDT, KLVELRRGTDPATLYCINFSHDSSFLCASSDKGTVHIFAL, and GPMI…ICVD. The L/FRRG motif signature appears at 231–234; it reads LRRG.

It belongs to the WD repeat PROPPIN family. Interacts with WIPI1. Interacts with WIPI2. Interacts with ATG2A and ATG2B. Interacts with ULK1. May interact with the PRKAA1, PRKAA2, PRKAB1 and PRKAG1 subunits of the AMPK kinase. May interact with NUDC. As to expression, ubiquitously expressed, with high expression in skeletal muscle and heart. Weakly expressed in liver and placenta. Expression is down-regulated in pancreatic and in kidney tumors.

It localises to the preautophagosomal structure. The protein resides in the cytoplasm. Its activity is regulated as follows. Activated upon amino-acid starvation. In terms of biological role, component of the autophagy machinery that controls the major intracellular degradation process by which cytoplasmic materials are packaged into autophagosomes and delivered to lysosomes for degradation. Binds phosphatidylinositol 3-phosphate (PtdIns3P). Activated by the STK11/AMPK signaling pathway upon starvation, WDR45 is involved in autophagosome assembly downstream of WIPI2, regulating the size of forming autophagosomes. Together with WIPI1, promotes ATG2 (ATG2A or ATG2B)-mediated lipid transfer by enhancing ATG2-association with phosphatidylinositol 3-monophosphate (PI3P)-containing membranes. Probably recruited to membranes through its PtdIns3P activity. This Homo sapiens (Human) protein is WD repeat domain phosphoinositide-interacting protein 4 (WDR45).